Reading from the N-terminus, the 638-residue chain is Chaperone protein HtpG (638 aa).

The segment at 1 to 344 is a; substrate-binding; it reads MQKKETLEFQ…SNDLPLNVSR (344 aa). The b stretch occupies residues 345 to 560; it reads EILQNNENIY…ENDITTQMSK (216 aa). The tract at residues 561–638 is c; sequence LLISTGQESP…LLLSNIIRLN (78 aa).

This sequence belongs to the heat shock protein 90 family. As to quaternary structure, homodimer.

It is found in the cytoplasm. Functionally, molecular chaperone. Has ATPase activity. The chain is Chaperone protein HtpG from Wigglesworthia glossinidia brevipalpis.